Reading from the N-terminus, the 253-residue chain is Discoidin-1 subunit A (253 aa).

At Ser-2 the chain carries N-acetylserine. Residues 2–152 (STQGLVQLLA…ISLRCEFYTQ (151 aa)) form the F5/8 type C domain. Positions 79–81 (RGD) match the Cell attachment site motif.

In terms of assembly, tetramer of four different chains (A to D). In terms of tissue distribution, stalk cells.

Its subcellular location is the cytoplasm. Functionally, galactose- and N-acetylgalactosamine-binding lectin. May play a role in cell-substratum adhesion rather than in cell-cell adhesion. May be necessary for the maintenance of normal elongate morphology during aggregation. This chain is Discoidin-1 subunit A (dscA-1), found in Dictyostelium discoideum (Social amoeba).